The following is a 635-amino-acid chain: Threonine--tRNA ligase (635 aa).

Positions 1-61 constitute a TGS domain; sequence MTVVRLPDGT…EIDSDLVLIT (61 aa). Residues 242–533 are catalytic; it reads DHRKLGKQLD…LIEHHAGALP (292 aa). Residues C333, H384, and H510 each contribute to the Zn(2+) site.

It belongs to the class-II aminoacyl-tRNA synthetase family. In terms of assembly, homodimer. It depends on Zn(2+) as a cofactor.

Its subcellular location is the cytoplasm. The enzyme catalyses tRNA(Thr) + L-threonine + ATP = L-threonyl-tRNA(Thr) + AMP + diphosphate + H(+). Its function is as follows. Catalyzes the attachment of threonine to tRNA(Thr) in a two-step reaction: L-threonine is first activated by ATP to form Thr-AMP and then transferred to the acceptor end of tRNA(Thr). Also edits incorrectly charged L-seryl-tRNA(Thr). This Nitrosomonas eutropha (strain DSM 101675 / C91 / Nm57) protein is Threonine--tRNA ligase.